The chain runs to 277 residues: Large ribosomal subunit protein uL2 (277 aa).

The tract at residues 223 to 277 (VTMNPVDHPHGGGEGRTSGGRHPVTPWGKPTKGMKTRSNKATDKFIVTSRHKRKK) is disordered.

It belongs to the universal ribosomal protein uL2 family. Part of the 50S ribosomal subunit. Forms a bridge to the 30S subunit in the 70S ribosome.

In terms of biological role, one of the primary rRNA binding proteins. Required for association of the 30S and 50S subunits to form the 70S ribosome, for tRNA binding and peptide bond formation. It has been suggested to have peptidyltransferase activity; this is somewhat controversial. Makes several contacts with the 16S rRNA in the 70S ribosome. The polypeptide is Large ribosomal subunit protein uL2 (Azorhizobium caulinodans (strain ATCC 43989 / DSM 5975 / JCM 20966 / LMG 6465 / NBRC 14845 / NCIMB 13405 / ORS 571)).